The sequence spans 370 residues: MEKYEPVREIGAGNFGVAKLMRNKETRELVAMKFIERGNRIDENVFREIVNHRSLRHPNIIRFKEVVVTGRHLAIVMEYAAGGELFERICEAGRFHEDEARYFFQQLVCGVSYCHAMQICHRDLKLENTLLDGSPAPRLKICDFGYSKSSLLHSRPKSTVGTPAYIAPEVLSRREYDGKLADVWSCGVTLYVMLVGAYPFEDPKDPKNFRKTISRIMSVQYKIPEYVHVSQPCRHLLSRIFVANPYKRISMGEIKSHPWFLKNLPRELKEEAQAVYYNRRGADHAASSASSAAAAAAFSPQSVEDIMRIVQEAQTVPKPDKPVSGYGWGTDDDDDDQQPAEEEDEEDDYDRTVREVHASVDLDMSNLQIS.

The region spanning 4–260 (YEPVREIGAG…MGEIKSHPWF (257 aa)) is the Protein kinase domain. ATP is bound by residues 10 to 18 (IGAGNFGVA) and Lys33. Asp123 acts as the Proton acceptor in catalysis. The disordered stretch occupies residues 312 to 370 (EAQTVPKPDKPVSGYGWGTDDDDDDQQPAEEEDEEDDYDRTVREVHASVDLDMSNLQIS). Acidic residues predominate over residues 330–349 (TDDDDDDQQPAEEEDEEDDY). Positions 350 to 360 (DRTVREVHASV) are enriched in basic and acidic residues.

Belongs to the protein kinase superfamily. Ser/Thr protein kinase family. Post-translationally, may be phosphorylated. As to expression, expressed in leaf blades, leaf sheaths and roots. Expressed in shoots and roots of young seedlings.

The protein localises to the cytoplasm. It is found in the nucleus. It catalyses the reaction L-seryl-[protein] + ATP = O-phospho-L-seryl-[protein] + ADP + H(+). The catalysed reaction is L-threonyl-[protein] + ATP = O-phospho-L-threonyl-[protein] + ADP + H(+). With respect to regulation, activated by hyperosmotic stress. In terms of biological role, may play a role in signal transduction of hyperosmotic response. This Oryza sativa subsp. japonica (Rice) protein is Serine/threonine-protein kinase SAPK5 (SAPK5).